The chain runs to 639 residues: MEIQSGPQPGSPGRAERLNARLLDEFVSLHGPTLRASGVPERLWGRLLHKLEHEVFDAGEMFGIMQVEEVEEAEDEAAREAQRKQPNPGGELCYKVIVTSESGVRADDPNSIFLIDHAWTCRVEHARKQLQQVPGLLHRMANLMGIEFHGEVPSPEVVALVLEEMWKFNQTYQLAHGTAEEKVPVWYIMDEFGSRIQHSDMPSFATAPFFYMPQQVAYTLLWPLRDLDTGEEVTRDFAYGEADPLIRKCMLLPWAPADMLDLSFSTPEPPAKYYQAILEENKEKLPLAISPVARPQGHVFRVHCDVQQVLGHLTHPRFTFTDSEADADIFFHFSHFKDYMKLSQESPQVLLNQFPCENLLTVKDCLASIARRAGGPEGPPWLPRTFNLRTELPQFVSYFQHRERRGEDNHWICKPWNLARSLDTHVTNNLHSIIRHRESTPKVVSKYIESPVLFLREDVGNVKFDIRYIVLLRSVRPLRLFAYDVFWLRFSNRPFALDDLDDYEKHFTVMNYDPDVVLKQVHYNEFIPQFEKQYPEFPWSDVQAEIFKAFTELFQVACAKPPPMGLCDYPSSRAMYAIDLMLNWDNHPDGKRVMQPQILEVNFNPDCERACRYHPSFFNDVFSTLFLDETDNCHVTRII.

A TTL domain is found at 295–639; sequence PQGHVFRVHC…TDNCHVTRII (345 aa). ATP contacts are provided by residues 445–448, Lys463, and Asp465; that span reads SKYI.

Belongs to the tubulin--tyrosine ligase family. In terms of assembly, interacts with MAVS; the interaction prevents MAVS binding to TBK1 and IKBKE. Interacts (via N-terminus) with TBK1 (via protein kinase domain). Interacts (via TTL domain) with IKBKE (via protein kinase domain). Interacts with tubulin alpha. Interacts with histone H3 and histone H4 (when trimethylated at 'Lys-20' (H4K20me3)). Interacts with CBX3. Widely expressed with highest levels in brain, kidney, liver, lung, muscle and testis.

The protein localises to the cytoplasm. The protein resides in the midbody. It localises to the cytoskeleton. Its subcellular location is the microtubule organizing center. It is found in the centrosome. The protein localises to the spindle. The protein resides in the nucleus. Negatively regulates post-translational modifications of tubulin, including detyrosination of the C-terminus and polyglutamylation of glutamate residues. Also, indirectly promotes histone H4 trimethylation at 'Lys-20' (H4K20me3). Probably by controlling tubulin and/or histone H4 post-translational modifications, plays a role in mitosis and in maintaining chromosome number stability. During RNA virus-mediated infection, acts as a negative regulator of the RIG-I pathway by preventing MAVS binding to TBK1 and IKBKE. This is Tubulin--tyrosine ligase-like protein 12 from Mus musculus (Mouse).